Consider the following 210-residue polypeptide: 3-demethoxyubiquinol 3-hydroxylase (210 aa).

Positions 59, 89, 92, 141, 173, and 176 each coordinate Fe cation.

It belongs to the COQ7 family. Requires Fe cation as cofactor.

Its subcellular location is the cell membrane. The enzyme catalyses a 5-methoxy-2-methyl-3-(all-trans-polyprenyl)benzene-1,4-diol + AH2 + O2 = a 3-demethylubiquinol + A + H2O. Its pathway is cofactor biosynthesis; ubiquinone biosynthesis. Functionally, catalyzes the hydroxylation of 2-nonaprenyl-3-methyl-6-methoxy-1,4-benzoquinol during ubiquinone biosynthesis. The polypeptide is 3-demethoxyubiquinol 3-hydroxylase (Marinomonas sp. (strain MWYL1)).